The following is a 531-amino-acid chain: Cytochrome c oxidase subunit 1 (531 aa).

The helical transmembrane segment at 18–38 (ILYLIYGMVSAMVATGMSVII) threads the bilayer. Ca(2+) is bound by residues E41 and G46. 6 helical membrane-spanning segments follow: residues 59–79 (VLVT…ILIG), 103–123 (ISFW…LIET), 149–169 (AIFA…NFIV), 185–205 (PLFV…LPVL), 237–257 (LFYF…FGII), and 269–289 (IFGQ…GFLV). Residue H64 coordinates Fe(II)-heme a. H243 provides a ligand contact to Cu cation. A cross-link (1'-histidyl-3'-tyrosine (His-Tyr)) is located at residues 243 to 247 (HPEVY). Y247 is a binding site for O2. Cu cation contacts are provided by H292 and H293. The next 2 membrane-spanning stretches (helical) occupy residues 312 to 332 (MVIA…LYGG) and 340 to 360 (MLFA…GVML). Residues H370 and D371 each contribute to the Mg(2+) site. Residue H378 coordinates heme a3. H380 serves as a coordination point for Fe(II)-heme a. Helical transmembrane passes span 385–405 (MGAL…MFGL) and 414–434 (VHYW…HFLG). P443 contributes to the Ca(2+) binding site. The helical transmembrane segment at 458 to 478 (WGSIMSVISVLIGLYSVLVQL) threads the bilayer.

This sequence belongs to the heme-copper respiratory oxidase family. Component of the cytochrome c oxidase (complex IV, CIV), a multisubunit enzyme composed of a catalytic core of 3 subunits and several supernumerary subunits. The complex exists as a monomer or a dimer and forms supercomplexes (SCs) in the inner mitochondrial membrane with ubiquinol-cytochrome c oxidoreductase (cytochrome b-c1 complex, complex III, CIII). Heme is required as a cofactor. It depends on Cu cation as a cofactor.

It is found in the mitochondrion inner membrane. The catalysed reaction is 4 Fe(II)-[cytochrome c] + O2 + 8 H(+)(in) = 4 Fe(III)-[cytochrome c] + 2 H2O + 4 H(+)(out). It participates in energy metabolism; oxidative phosphorylation. Functionally, component of the cytochrome c oxidase, the last enzyme in the mitochondrial electron transport chain which drives oxidative phosphorylation. The respiratory chain contains 3 multisubunit complexes succinate dehydrogenase (complex II, CII), ubiquinol-cytochrome c oxidoreductase (cytochrome b-c1 complex, complex III, CIII) and cytochrome c oxidase (complex IV, CIV), that cooperate to transfer electrons derived from NADH and succinate to molecular oxygen, creating an electrochemical gradient over the inner membrane that drives transmembrane transport and the ATP synthase. Cytochrome c oxidase is the component of the respiratory chain that catalyzes the reduction of oxygen to water. Electrons originating from reduced cytochrome c in the intermembrane space (IMS) are transferred via the dinuclear copper A center (CU(A)) of subunit 2 and heme A of subunit 1 to the active site in subunit 1, a binuclear center (BNC) formed by heme A3 and copper B (CU(B)). The BNC reduces molecular oxygen to 2 water molecules using 4 electrons from cytochrome c in the IMS and 4 protons from the mitochondrial matrix. The polypeptide is Cytochrome c oxidase subunit 1 (COX1) (Candida albicans (strain SC5314 / ATCC MYA-2876) (Yeast)).